Reading from the N-terminus, the 178-residue chain is Disulfide bond formation protein B (178 aa).

The Cytoplasmic segment spans residues 1-16 (MTIFSSLNQFSKGHVS). A helical membrane pass occupies residues 17–33 (WLLLLLFIIFFEACALY). Over 34–51 (FQHVMMLAPCVMCIYERV) the chain is Periplasmic. Cys43 and Cys46 form a disulfide bridge. A helical transmembrane segment spans residues 52–67 (AMMGIGGAAIIGLIAP). At 68-74 (NNALFRW) the chain is on the cytoplasmic side. The chain crosses the membrane as a helical span at residues 75 to 92 (LGLIGWGLSSYKGLMLAM). Residues 93-147 (QHVDYQFNPSPFATCDLFVTFPSWAPLNQWVPWMFEAYGDCSKIVWQFFDLSMPQ) are Periplasmic-facing. A disulfide bond links Cys107 and Cys133. Residues 148-166 (WLVVIFAGNLVALALIVIA) form a helical membrane-spanning segment. Over 167-178 (QFFPVKRKNPIR) the chain is Cytoplasmic.

This sequence belongs to the DsbB family.

The protein localises to the cell inner membrane. Its function is as follows. Required for disulfide bond formation in some periplasmic proteins. Acts by oxidizing the DsbA protein. This Vibrio parahaemolyticus serotype O3:K6 (strain RIMD 2210633) protein is Disulfide bond formation protein B.